Consider the following 279-residue polypeptide: Probable ribosomal RNA small subunit methyltransferase A (279 aa).

S-adenosyl-L-methionine is bound by residues Asn23, Leu25, Gly50, Glu71, Asp95, and Asn110.

It belongs to the class I-like SAM-binding methyltransferase superfamily. rRNA adenine N(6)-methyltransferase family. RsmA subfamily.

It localises to the cytoplasm. In terms of biological role, specifically dimethylates two adjacent adenosines in the loop of a conserved hairpin near the 3'-end of 16S rRNA in the 30S particle. May play a critical role in biogenesis of 30S subunits. The polypeptide is Probable ribosomal RNA small subunit methyltransferase A (Thermococcus kodakarensis (strain ATCC BAA-918 / JCM 12380 / KOD1) (Pyrococcus kodakaraensis (strain KOD1))).